Here is a 143-residue protein sequence, read N- to C-terminus: Flagellar assembly factor FliW (143 aa).

Belongs to the FliW family. As to quaternary structure, interacts with translational regulator CsrA and flagellin(s).

It localises to the cytoplasm. In terms of biological role, acts as an anti-CsrA protein, binds CsrA and prevents it from repressing translation of its target genes, one of which is flagellin. Binds to flagellin and participates in the assembly of the flagellum. The chain is Flagellar assembly factor FliW from Bacillus velezensis (strain DSM 23117 / BGSC 10A6 / LMG 26770 / FZB42) (Bacillus amyloliquefaciens subsp. plantarum).